A 445-amino-acid polypeptide reads, in one-letter code: Clusterin (445 aa).

A signal peptide spans 1–22 (MMKTLLLLVGLLLTWDNGRVLG). The Nuclear localization signal motif lies at 78–81 (KKKK). Asparagine 86 and asparagine 103 each carry an N-linked (GlcNAc...) asparagine glycan. 5 disulfides stabilise this stretch: cysteine 102–cysteine 309, cysteine 113–cysteine 301, cysteine 116–cysteine 298, cysteine 121–cysteine 291, and cysteine 129–cysteine 281. Serine 133 carries the post-translational modification Phosphoserine. N-linked (GlcNAc...) asparagine glycosylation is found at asparagine 145, asparagine 277, asparagine 287, asparagine 350, and asparagine 370. Position 392 is a phosphoserine (serine 392). The short motif at 439-443 (RQKHR) is the Nuclear localization signal element.

It belongs to the clusterin family. As to quaternary structure, antiparallel disulfide-linked heterodimer of an alpha chain and a beta chain. Self-associates and forms higher oligomers. Interacts with a broad range of misfolded proteins, including APP, APOC2 and LYZ. Slightly acidic pH promotes interaction with misfolded proteins. Forms high-molecular weight oligomers upon interaction with misfolded proteins. Interacts with APOA1, LRP2, CLUAP1 and PON1. Interacts with the complement membrane attack complex. Interacts (via alpha chain) with XRCC6. Interacts with SYVN1, COMMD1, BTRC, CUL1 and with ubiquitin and SCF (SKP1-CUL1-F-box protein) E3 ubiquitin-protein ligase complexes. Interacts (via alpha chain) with BAX in stressed cells, where BAX undergoes a conformation change leading to association with the mitochondrial membrane. Does not interact with BAX in unstressed cells. Found in a complex with LTF, CLU, EPPIN and SEMG1. Interacts (immaturely glycosylated pre-secreted form) with HSPA5; this interaction promotes CLU stability and facilitates stress-induced CLU retrotranslocation from the secretory pathway to the mitochondria, thereby reducing stress-induced apoptosis by stabilizing mitochondrial membrane integrity. Interacts with BCL2L1; this interaction releases and activates BAX and promotes cell death. Interacts with TGFBR2 and ACVR1. Interacts (secreted form) with STMN3; this interaction may act as an important modulator during neuronal differentiation. Interacts with VLDLR and LRP8. Post-translationally, proteolytically cleaved on its way through the secretory system, probably within the Golgi lumen. Proteolytic cleavage is not necessary for its chaperone activity. All non-secreted forms are not proteolytically cleaved. Chaperone activity of uncleaved forms is dependent on a non-reducing environment. This proteolytic maturation is disulfide bond formation dependent. In terms of processing, polyubiquitinated, leading to proteasomal degradation. Under cellular stress, the intracellular level of cleaved form is reduced due to proteasomal degradation. Heavily N-glycosylated. About 30% of the protein mass is comprised of complex N-linked carbohydrate. Endoplasmic reticulum (ER) stress induces changes in glycosylation status and increases level of hypoglycosylated forms. Core carbohydrates are essential for chaperone activity. Non-secreted forms are hypoglycosylated or unglycosylated.

It localises to the secreted. Its subcellular location is the nucleus. The protein resides in the cytoplasm. The protein localises to the mitochondrion membrane. It is found in the cytosol. It localises to the microsome. Its subcellular location is the endoplasmic reticulum. The protein resides in the mitochondrion. The protein localises to the perinuclear region. It is found in the cytoplasmic vesicle. It localises to the secretory vesicle. Its subcellular location is the chromaffin granule. Its function is as follows. Functions as extracellular chaperone that prevents aggregation of non native proteins. Prevents stress-induced aggregation of blood plasma proteins. Inhibits formation of amyloid fibrils by APP, APOC2, B2M, CALCA, CSN3, SNCA and aggregation-prone LYZ variants (in vitro). Does not require ATP. Maintains partially unfolded proteins in a state appropriate for subsequent refolding by other chaperones, such as HSPA8/HSC70. Does not refold proteins by itself. Binding to cell surface receptors triggers internalization of the chaperone-client complex and subsequent lysosomal or proteasomal degradation. When secreted, protects cells against apoptosis and against cytolysis by complement: inhibits assembly of the complement membrane attack complex (MAC) by preventing polymerization of C9 pore component of the MAC complex. Intracellular forms interact with ubiquitin and SCF (SKP1-CUL1-F-box protein) E3 ubiquitin-protein ligase complexes and promote the ubiquitination and subsequent proteasomal degradation of target proteins. Promotes proteasomal degradation of COMMD1 and IKBKB. Modulates NF-kappa-B transcriptional activity. Following stress, promotes apoptosis. Inhibits apoptosis when associated with the mitochondrial membrane by interference with BAX-dependent release of cytochrome c into the cytoplasm. Plays a role in the regulation of cell proliferation. An intracellular form suppresses stress-induced apoptosis by stabilizing mitochondrial membrane integrity through interaction with HSPA5. Secreted form does not affect caspase or BAX-mediated intrinsic apoptosis and TNF-induced NF-kappa-B-activity. Secreted form act as an important modulator during neuronal differentiation through interaction with STMN3. Plays a role in the clearance of immune complexes that arise during cell injury. The sequence is that of Clusterin (CLU) from Canis lupus familiaris (Dog).